The chain runs to 337 residues: MDLDQIVADAQQSFEGAADITTLENEKARFLGKSGALTELLKGLGKLDPETRKTEGARINVAKQQVEAALNARRQALADALLNQRLAAEAIDVTLPGRGAGAGSLHPVMRTWERVEQIFRSIGFDVADGPEIETDWYNFTALNSPENHPARSMQDTFYVDGKDADGRPLLLRTHTSPMQVRYARMNRPPIKVIAPGRTYRVDSDATHSPMFNQVEGLWIDENVSFADLKGAYTDFLKKFFERDDILVRFRPSYFPFTEPSAEIDMMFEHGKNAGKWLEISGSGQVHPTVIRNMGLDPERYIGFAFGSGLERLTMLRYGVQDLRLFFENDLRFLRQFA.

A Mg(2+)-binding site is contributed by E258.

Belongs to the class-II aminoacyl-tRNA synthetase family. Phe-tRNA synthetase alpha subunit type 1 subfamily. As to quaternary structure, tetramer of two alpha and two beta subunits. Mg(2+) serves as cofactor.

The protein localises to the cytoplasm. It carries out the reaction tRNA(Phe) + L-phenylalanine + ATP = L-phenylalanyl-tRNA(Phe) + AMP + diphosphate + H(+). The sequence is that of Phenylalanine--tRNA ligase alpha subunit from Burkholderia mallei (strain ATCC 23344).